The primary structure comprises 244 residues: RNA transcription, translation and transport factor protein (244 aa).

An N6-acetyllysine mark is found at Lys20, Lys62, and Lys98.

This sequence belongs to the RTRAF family. Homodimer. Interacts with FAM98A (via N- and C-terminus). Interacts with NIN; which may prevent phosphorylation of NIN. Interacts with POLR2A. Component of a tRNA-splicing ligase complex.

It is found in the nucleus. The protein localises to the cytoplasm. It localises to the cytosol. The protein resides in the perinuclear region. Its subcellular location is the cytoskeleton. It is found in the microtubule organizing center. The protein localises to the centrosome. Its function is as follows. RNA-binding protein involved in modulation of mRNA transcription by Polymerase II. Component of the tRNA-splicing ligase complex and is required for tRNA ligation. May be required for RNA transport. The sequence is that of RNA transcription, translation and transport factor protein from Mus musculus (Mouse).